The sequence spans 678 residues: MGYGNSRSVRFQEDQEVVHGGESGVKLKFKINGTQINNVKMMSKGKFLKAKVLSRVFSEDLERVKTKILDPRGQTIRRWNKIFLIACLVSLFVDPLFFFLPVMRNEACITIGVRLEVVLTLIRSLADAFYIAQILIRFRTAYIAPPSRVFGRGELVIDSRKIAWRYLHKSFWIHLVAALPLPQVLIWIIIPNLRGSPMTNTKNVLRFIIIFQYVPRMFLIFPLSRQIIKATGVVTETAWAGAAYNLMLYMLASHVLGACWYLLAVERQEACWRHACNIEKQICQYRFFECRRLEDPQRNSWFEWSNITTICKPASKFYEFGIFGDAVTSTVTSSKFINKYFYCLWWGLKNLSSLGQNLATSTYAGEILFAIIIATLGLVLFALLIGNMQTYLQSTTMRLEEWRIRRTDTEQWMHHRQLPPELRQAVRKYDQYKWLATRGVDEEALLISLPLDLRRDIKRHLCFDLVRRVPLFDQMDERMLDAICERLKPALCTEGTFLVREGDPVNEMLFIIRGHLDSYTTNGGRTGFFNSCLIGPGDFCGEELLTWALDPRPVVILPSSTRTVKAICEVEAFALKAEDLQFVASQFRRLHTKQLRHKFRFYSHQWRTWAACFIQAAWRRHRKRKYKTELRAKEEFHYRFEAATARLAVNGGKYTRSGSDSGMMSSIQKPVEPDFSSE.

Residues 1–81 (MGYGNSRSVR…RGQTIRRWNK (81 aa)) lie on the Cytoplasmic side of the membrane. The helical transmembrane segment at 82–102 (IFLIACLVSLFVDPLFFFLPV) threads the bilayer. Topologically, residues 103-115 (MRNEACITIGVRL) are extracellular. Residues 116–136 (EVVLTLIRSLADAFYIAQILI) form a helical membrane-spanning segment. At 137–170 (RFRTAYIAPPSRVFGRGELVIDSRKIAWRYLHKS) the chain is on the cytoplasmic side. The chain crosses the membrane as a helical span at residues 171 to 191 (FWIHLVAALPLPQVLIWIIIP). Residues 192-203 (NLRGSPMTNTKN) are Extracellular-facing. The chain crosses the membrane as a helical span at residues 204 to 224 (VLRFIIIFQYVPRMFLIFPLS). Residues 225–245 (RQIIKATGVVTETAWAGAAYN) lie on the Cytoplasmic side of the membrane. Residues 246–266 (LMLYMLASHVLGACWYLLAVE) traverse the membrane as a helical segment. Topologically, residues 267-364 (RQEACWRHAC…GQNLATSTYA (98 aa)) are extracellular. The chain crosses the membrane as a helical span at residues 365–385 (GEILFAIIIATLGLVLFALLI). The Cytoplasmic portion of the chain corresponds to 386–678 (GNMQTYLQST…KPVEPDFSSE (293 aa)). A nucleoside 3',5'-cyclic phosphate is bound by residues 471–595 (LFDQ…TKQL) and E542. The calmodulin-binding stretch occupies residues 587–602 (FRRLHTKQLRHKFRFY). The region spanning 607-638 (RTWAACFIQAAWRRHRKRKYKTELRAKEEFHY) is the IQ domain. Polar residues predominate over residues 656–668 (RSGSDSGMMSSIQ). Residues 656–678 (RSGSDSGMMSSIQKPVEPDFSSE) are disordered.

It belongs to the cyclic nucleotide-gated cation channel (TC 1.A.1.5) family. As to quaternary structure, homotetramer or heterotetramer.

The protein localises to the cell membrane. Its function is as follows. Putative cyclic nucleotide-gated ion channel. This chain is Putative cyclic nucleotide-gated ion channel 15 (CNGC15), found in Arabidopsis thaliana (Mouse-ear cress).